The sequence spans 168 residues: Phosphopantetheine adenylyltransferase (168 aa).

Thr10 lines the substrate pocket. ATP contacts are provided by residues 10–11 (TF) and His18. The substrate site is built by Lys42, Leu74, and Arg88. ATP contacts are provided by residues 89-91 (GLR), Glu99, and 124-130 (NSFISST).

The protein belongs to the bacterial CoaD family. In terms of assembly, homohexamer. Mg(2+) is required as a cofactor.

The protein localises to the cytoplasm. It catalyses the reaction (R)-4'-phosphopantetheine + ATP + H(+) = 3'-dephospho-CoA + diphosphate. The protein operates within cofactor biosynthesis; coenzyme A biosynthesis; CoA from (R)-pantothenate: step 4/5. Its function is as follows. Reversibly transfers an adenylyl group from ATP to 4'-phosphopantetheine, yielding dephospho-CoA (dPCoA) and pyrophosphate. In Shewanella denitrificans (strain OS217 / ATCC BAA-1090 / DSM 15013), this protein is Phosphopantetheine adenylyltransferase.